A 152-amino-acid polypeptide reads, in one-letter code: Small ribosomal subunit protein uS15 (152 aa).

The protein belongs to the universal ribosomal protein uS15 family. As to quaternary structure, part of the 30S ribosomal subunit.

This Methanospirillum hungatei JF-1 (strain ATCC 27890 / DSM 864 / NBRC 100397 / JF-1) protein is Small ribosomal subunit protein uS15.